A 206-amino-acid chain; its full sequence is N-(5'-phosphoribosyl)anthranilate isomerase (206 aa).

This sequence belongs to the TrpF family.

It carries out the reaction N-(5-phospho-beta-D-ribosyl)anthranilate = 1-(2-carboxyphenylamino)-1-deoxy-D-ribulose 5-phosphate. It functions in the pathway amino-acid biosynthesis; L-tryptophan biosynthesis; L-tryptophan from chorismate: step 3/5. This Pseudomonas putida (strain GB-1) protein is N-(5'-phosphoribosyl)anthranilate isomerase.